A 99-amino-acid polypeptide reads, in one-letter code: Ragulator complex protein LAMTOR4 (99 aa).

N-acetylmethionine is present on M1. T2 carries the post-translational modification N-acetylthreonine; in Ragulator complex protein LAMTOR4, N-terminally processed. Phosphoserine; by PKA is present on S67.

The protein belongs to the LAMTOR4 family. Part of the Ragulator complex composed of LAMTOR1, LAMTOR2, LAMTOR3, LAMTOR4 and LAMTOR5. LAMTOR4 and LAMTOR5 form a heterodimer that interacts, through LAMTOR1, with a LAMTOR2, LAMTOR3 heterodimer. The Ragulator complex interacts with both the mTORC1 complex and heterodimers constituted of the Rag GTPases RagA/RRAGA, RagB/RRAGB, RagC/RRAGC and RagD/RRAGD; regulated by amino acid availability. The Ragulator complex interacts with SLC38A9; the probable amino acid sensor. Component of the lysosomal folliculin complex (LFC), composed of FLCN, FNIP1 (or FNIP2), RagA/RRAGA or RagB/RRAGB GDP-bound, RagC/RRAGC or RagD/RRAGD GTP-bound, and Ragulator. In terms of processing, phosphorylation at Ser-67 by PKA inhibits Ragulator complex assembly.

The protein localises to the lysosome. As part of the Ragulator complex it is involved in amino acid sensing and activation of mTORC1, a signaling complex promoting cell growth in response to growth factors, energy levels, and amino acids. Activated by amino acids through a mechanism involving the lysosomal V-ATPase, the Ragulator plays a dual role for the small GTPases Rag (RagA/RRAGA, RagB/RRAGB, RagC/RRAGC and/or RagD/RRAGD): it (1) acts as a guanine nucleotide exchange factor (GEF), activating the small GTPases Rag and (2) mediates recruitment of Rag GTPases to the lysosome membrane. Activated Ragulator and Rag GTPases function as a scaffold recruiting mTORC1 to lysosomes where it is in turn activated. This is Ragulator complex protein LAMTOR4 from Homo sapiens (Human).